A 590-amino-acid polypeptide reads, in one-letter code: Histone-binding protein N1/N2 (590 aa).

Positions 1–30 are disordered; sequence MAEETAALSTEKTEDTSTAPSTSAEKADGI. The TPR 1 repeat unit spans residues 36-69; it reads AKRLMGAGQKHLVMKDVRSAVNLFQEASSLLAKQ. Residues 102–328 are disordered; sequence ALEGMPEDDE…EKETEEEDVG (227 aa). Residues 106-120 are compositionally biased toward acidic residues; it reads MPEDDEEEAEKEEDP. 2 stretches are compositionally biased toward basic and acidic residues: residues 128 to 250 and 262 to 275; these read LDEK…DAKE and AEEK…ESKE. A compositionally biased stretch (acidic residues) spans 293 to 327; that stretch reads EKMEEEEEGEDSEENEDGTEENEGTEEKETEEEDV. 2 TPR repeats span residues 357 to 390 and 399 to 432; these read AQAH…QKEH and AETH…IEKR. The disordered stretch occupies residues 492 to 590; it reads GGSSGFSKEN…METATVESTA (99 aa). Residues 496-525 show a composition bias toward polar residues; the sequence is GFSKENGSTSSSSAVEKSGDSTVPVTNCVS. The Nuclear localization signal signature appears at 531-537; the sequence is VRKKRKT. Residues 536-553 show a composition bias toward basic and acidic residues; the sequence is KTEEESPLKDKDAKKSKQ.

Belongs to the NASP family.

The protein localises to the nucleus. Its function is as follows. This protein is involved in nucleosome assembly. It is bound to H3 and H4 in the absence of DNA, but released from H3 and H4 in the presence of DNA. This chain is Histone-binding protein N1/N2, found in Xenopus laevis (African clawed frog).